The following is a 310-amino-acid chain: Nodulation protein D 2 (310 aa).

The 58-residue stretch at 6–63 (LDLNLLVALDALMTERKLTAAARRVKLSQPAMSAAIARLRTYFGDELFSMQGRELIPT) folds into the HTH lysR-type domain. A DNA-binding region (H-T-H motif) is located at residues 23–42 (LTAAARRVKLSQPAMSAAIA).

It belongs to the LysR transcriptional regulatory family.

Its function is as follows. NodD regulates the expression of the nodABCFE genes which encode other nodulation proteins. NodD is also a negative regulator of its own expression. Binds flavonoids as inducers. This is Nodulation protein D 2 (nodD2) from Rhizobium meliloti (strain 1021) (Ensifer meliloti).